The primary structure comprises 302 residues: 4-hydroxy-tetrahydrodipicolinate synthase (302 aa).

Threonine 55 provides a ligand contact to pyruvate. Residue tyrosine 143 is the Proton donor/acceptor of the active site. Lysine 171 (schiff-base intermediate with substrate) is an active-site residue. Isoleucine 213 contributes to the pyruvate binding site.

This sequence belongs to the DapA family. Homotetramer; dimer of dimers.

The protein localises to the cytoplasm. The enzyme catalyses L-aspartate 4-semialdehyde + pyruvate = (2S,4S)-4-hydroxy-2,3,4,5-tetrahydrodipicolinate + H2O + H(+). Its pathway is amino-acid biosynthesis; L-lysine biosynthesis via DAP pathway; (S)-tetrahydrodipicolinate from L-aspartate: step 3/4. Catalyzes the condensation of (S)-aspartate-beta-semialdehyde [(S)-ASA] and pyruvate to 4-hydroxy-tetrahydrodipicolinate (HTPA). This is 4-hydroxy-tetrahydrodipicolinate synthase from Psychrobacter sp. (strain PRwf-1).